A 283-amino-acid polypeptide reads, in one-letter code: NADPH-dependent 7-cyano-7-deazaguanine reductase (283 aa).

90–92 (IES) contacts substrate. An NADPH-binding site is contributed by 92–93 (SK). Cys191 functions as the Thioimide intermediate in the catalytic mechanism. Asp198 serves as the catalytic Proton donor. Position 230 to 231 (230 to 231 (HE)) interacts with substrate. 259–260 (RG) serves as a coordination point for NADPH.

The protein belongs to the GTP cyclohydrolase I family. QueF type 2 subfamily. Homodimer.

It localises to the cytoplasm. It carries out the reaction 7-aminomethyl-7-carbaguanine + 2 NADP(+) = 7-cyano-7-deazaguanine + 2 NADPH + 3 H(+). It participates in tRNA modification; tRNA-queuosine biosynthesis. Its function is as follows. Catalyzes the NADPH-dependent reduction of 7-cyano-7-deazaguanine (preQ0) to 7-aminomethyl-7-deazaguanine (preQ1). This Tolumonas auensis (strain DSM 9187 / NBRC 110442 / TA 4) protein is NADPH-dependent 7-cyano-7-deazaguanine reductase.